The primary structure comprises 800 residues: Phenylalanine--tRNA ligase beta subunit (800 aa).

The 116-residue stretch at 39 to 154 folds into the tRNA-binding domain; it reads TKDIKNLVVG…ESQVPGTDAL (116 aa). Residues 408 to 483 form the B5 domain; it reads AFITPIDITA…RIYGYDDIPS (76 aa). Residues D461, D467, E470, and E471 each coordinate Mg(2+). The region spanning 708 to 800 is the FDX-ACB domain; sequence PIFPGMSRDI…ALIEQGAVIR (93 aa).

It belongs to the phenylalanyl-tRNA synthetase beta subunit family. Type 1 subfamily. In terms of assembly, tetramer of two alpha and two beta subunits. Mg(2+) is required as a cofactor.

It is found in the cytoplasm. The catalysed reaction is tRNA(Phe) + L-phenylalanine + ATP = L-phenylalanyl-tRNA(Phe) + AMP + diphosphate + H(+). The sequence is that of Phenylalanine--tRNA ligase beta subunit from Staphylococcus aureus (strain bovine RF122 / ET3-1).